The chain runs to 77 residues: U8-lycotoxin-Ls1r (77 aa).

The signal sequence occupies residues 1–20; it reads MKLIIFTGLVLFAIVSLIEA. Residues 21-26 constitute a propeptide that is removed on maturation; that stretch reads QAENEK.

This sequence belongs to the neurotoxin 19 (CSTX) family. 08 (U8-Lctx) subfamily. Post-translationally, contains 4 disulfide bonds. Expressed by the venom gland.

The protein localises to the secreted. The chain is U8-lycotoxin-Ls1r from Lycosa singoriensis (Wolf spider).